Reading from the N-terminus, the 261-residue chain is tRNA pseudouridine synthase A (261 aa).

Asp-51 acts as the Nucleophile in catalysis. Tyr-109 is a binding site for substrate.

This sequence belongs to the tRNA pseudouridine synthase TruA family. As to quaternary structure, homodimer.

The catalysed reaction is uridine(38/39/40) in tRNA = pseudouridine(38/39/40) in tRNA. Formation of pseudouridine at positions 38, 39 and 40 in the anticodon stem and loop of transfer RNAs. The chain is tRNA pseudouridine synthase A from Psychromonas ingrahamii (strain DSM 17664 / CCUG 51855 / 37).